Reading from the N-terminus, the 24-residue chain is Brevinin-1BYa (24 aa).

An intrachain disulfide couples Cys18 to Cys24.

In terms of tissue distribution, expressed by the skin glands.

It localises to the secreted. In terms of biological role, antibacterial activity against Gram-positive bacterium S.aureus and Gram-negative bacterium E.coli. High antifungal activity against C.albicans and a strong hemolytic activity. The protein is Brevinin-1BYa of Rana boylii (Foothill yellow-legged frog).